The sequence spans 84 residues: Small ribosomal subunit protein uS17c (84 aa).

The protein belongs to the universal ribosomal protein uS17 family. As to quaternary structure, part of the 30S ribosomal subunit.

It localises to the plastid. The protein localises to the chloroplast. Its function is as follows. One of the primary rRNA binding proteins, it binds specifically to the 5'-end of 16S ribosomal RNA. The protein is Small ribosomal subunit protein uS17c (rps17) of Trieres chinensis (Marine centric diatom).